Consider the following 577-residue polypeptide: Sulfite reductase [NADPH] hemoprotein beta-component (577 aa).

4 residues coordinate [4Fe-4S] cluster: cysteine 441, cysteine 447, cysteine 486, and cysteine 490. A siroheme-binding site is contributed by cysteine 490.

This sequence belongs to the nitrite and sulfite reductase 4Fe-4S domain family. Alpha(8)-beta(8). The alpha component is a flavoprotein, the beta component is a hemoprotein. It depends on siroheme as a cofactor. [4Fe-4S] cluster is required as a cofactor.

The enzyme catalyses hydrogen sulfide + 3 NADP(+) + 3 H2O = sulfite + 3 NADPH + 4 H(+). The protein operates within sulfur metabolism; hydrogen sulfide biosynthesis; hydrogen sulfide from sulfite (NADPH route): step 1/1. Component of the sulfite reductase complex that catalyzes the 6-electron reduction of sulfite to sulfide. This is one of several activities required for the biosynthesis of L-cysteine from sulfate. In Pectobacterium atrosepticum (strain SCRI 1043 / ATCC BAA-672) (Erwinia carotovora subsp. atroseptica), this protein is Sulfite reductase [NADPH] hemoprotein beta-component.